We begin with the raw amino-acid sequence, 99 residues long: Small ribosomal subunit protein bS18 (99 aa).

Residues 1–25 (MAESKGRPGSASQRPTGGDKAIAGQ) are disordered.

It belongs to the bacterial ribosomal protein bS18 family. As to quaternary structure, part of the 30S ribosomal subunit. Forms a tight heterodimer with protein bS6.

In terms of biological role, binds as a heterodimer with protein bS6 to the central domain of the 16S rRNA, where it helps stabilize the platform of the 30S subunit. This Solibacter usitatus (strain Ellin6076) protein is Small ribosomal subunit protein bS18.